The sequence spans 156 residues: Arginine repressor (156 aa).

The protein belongs to the ArgR family.

It is found in the cytoplasm. It functions in the pathway amino-acid biosynthesis; L-arginine biosynthesis [regulation]. Its function is as follows. Regulates arginine biosynthesis genes. This Citrobacter koseri (strain ATCC BAA-895 / CDC 4225-83 / SGSC4696) protein is Arginine repressor.